Reading from the N-terminus, the 843-residue chain is Probable disease resistance protein At5g47250 (843 aa).

A coiled-coil region spans residues 28 to 58 (MLKENLVLLKSAFDELKAEKEDVVNRVNAGE). The region spanning 141–440 (TEQPPPPVVE…GEGFIDEKDG (300 aa)) is the NB-ARC domain. 183–190 (GMGGVGKT) is an ATP binding site. LRR repeat units follow at residues 510–531 (TVTKMSLFNNEIKNIPDDPEFP), 535–556 (NLVTLFLQNNRLVDIVGKFFLV), 559–581 (TLVVLDLSWNFQITELPKGISAL), 583–604 (SLRLLNLSGTSIKHLPEGLGVL), and 606–628 (KLIHLNLESTSNLRSVGLISELQ).

This sequence belongs to the disease resistance NB-LRR family.

Functionally, probable disease resistance protein. The polypeptide is Probable disease resistance protein At5g47250 (Arabidopsis thaliana (Mouse-ear cress)).